Here is a 201-residue protein sequence, read N- to C-terminus: MGVKKLSRKDYLNILESILFIDFLKGLSVTLKNLLRRPITTEYPKEKLTPPKRFRGAHGHYVWDGTEPDSLKAIEKFMSYEKAKSRCVACYMCQTACPMPTLFRIEAVQLPNGKKKVVRFDMNLLNCLFCGLCVDACPVGCLTMTDIFELANYSRRNEVLRMEDLEKFAIDFKQRRGNEPDRIWPNDEEREKLWGKIEWSG.

2 4Fe-4S ferredoxin-type domains span residues Met78–Ala107 and Lys116–Ile147. [4Fe-4S] cluster-binding residues include Cys87, Cys90, Cys93, Cys97, Cys127, Cys130, Cys133, and Cys137.

Belongs to the complex I 23 kDa subunit family. In terms of assembly, NDH-1 is composed of 14 different subunits. Subunits NuoA, H, J, K, L, M, N constitute the membrane sector of the complex. It depends on [4Fe-4S] cluster as a cofactor.

It localises to the cell inner membrane. The enzyme catalyses a quinone + NADH + 5 H(+)(in) = a quinol + NAD(+) + 4 H(+)(out). In terms of biological role, NDH-1 shuttles electrons from NADH, via FMN and iron-sulfur (Fe-S) centers, to quinones in the respiratory chain. The immediate electron acceptor for the enzyme in this species is believed to be ubiquinone. Couples the redox reaction to proton translocation (for every two electrons transferred, four hydrogen ions are translocated across the cytoplasmic membrane), and thus conserves the redox energy in a proton gradient. The polypeptide is NADH-quinone oxidoreductase subunit I (Aquifex aeolicus (strain VF5)).